We begin with the raw amino-acid sequence, 227 residues long: tRNA (guanine-N(1)-)-methyltransferase (227 aa).

S-adenosyl-L-methionine contacts are provided by residues glycine 112 and 132–137 (IGDFIL).

This sequence belongs to the RNA methyltransferase TrmD family. Homodimer.

It is found in the cytoplasm. The catalysed reaction is guanosine(37) in tRNA + S-adenosyl-L-methionine = N(1)-methylguanosine(37) in tRNA + S-adenosyl-L-homocysteine + H(+). Specifically methylates guanosine-37 in various tRNAs. This chain is tRNA (guanine-N(1)-)-methyltransferase, found in Sulfurovum sp. (strain NBC37-1).